The following is a 135-amino-acid chain: Transmembrane protein 107 (135 aa).

The next 4 membrane-spanning stretches (helical) occupy residues 7-27, 55-75, 83-103, and 110-130; these read LVPA…TIFW, VALS…LSGV, ALLS…FVFH, and YWII…FLLL.

It localises to the membrane. Functionally, may play a role in cilia formation and embryonic patterning. The protein is Transmembrane protein 107 (tmem107) of Danio rerio (Zebrafish).